The chain runs to 515 residues: Thioredoxin domain-containing protein 2 (515 aa).

The segment at 1-23 is disordered; it reads MTLNNGGKANERGSNENPLQALS. A phosphoserine mark is found at Ser-14 and Ser-39. A disordered region spans residues 51–390; it reads TLHMSTEESE…NTIKSSEEDV (340 aa). Composition is skewed to polar residues over residues 61–75 and 85–136; these read FPQQ…SENT and KPSS…TNST. 21 tandem repeats follow at residues 92 to 106, 107 to 121, 122 to 136, 137 to 151, 152 to 166, 167 to 181, 182 to 196, 197 to 211, 212 to 226, 227 to 241, 242 to 256, 257 to 271, 272 to 286, 287 to 301, 302 to 316, 317 to 331, 332 to 346, 347 to 362, 363 to 375, 376 to 390, and 391 to 405. Residues 92-405 form a 21 X 15 AA approximate tandem repeat of Q-P-K-X-G-D-I-P-K-S-[PS]-E-[KE]-X-I region; the sequence is QLKQENISKS…KLLGLGAEIE (314 aa). Composition is skewed to basic and acidic residues over residues 137-293 and 302-358; these read HYRE…ETKV and QSKE…KSPE. Ser-146 carries the phosphoserine modification. A compositionally biased stretch (polar residues) spans 375 to 384; that stretch reads IQSQEGNTIK. Residues 398-515 form the Thioredoxin domain; sequence LGLGAEIETL…KLERSISELK (118 aa). A disulfide bridge connects residues Cys-442 and Cys-445.

Testis-specific. Strongly expressed in the testicular seminiferous tubules, mostly in the round spermatids.

It localises to the cytoplasm. Its function is as follows. Probably plays a regulatory role in sperm development. May participate in regulation of fibrous sheath (FS) assembly by supporting the formation of disulfide bonds during sperm tail morphogenesis. May also be required to rectify incorrect disulfide pairing and generate suitable pairs between the FS constituents. Can reduce disulfide bonds in vitro in the presence of NADP and thioredoxin reductase. This Mus musculus (Mouse) protein is Thioredoxin domain-containing protein 2 (Txndc2).